Reading from the N-terminus, the 258-residue chain is Acyl-[acyl-carrier-protein]--UDP-N-acetylglucosamine O-acyltransferase (258 aa).

It belongs to the transferase hexapeptide repeat family. LpxA subfamily. Homotrimer.

The protein resides in the cytoplasm. The enzyme catalyses a (3R)-hydroxyacyl-[ACP] + UDP-N-acetyl-alpha-D-glucosamine = a UDP-3-O-[(3R)-3-hydroxyacyl]-N-acetyl-alpha-D-glucosamine + holo-[ACP]. It functions in the pathway glycolipid biosynthesis; lipid IV(A) biosynthesis; lipid IV(A) from (3R)-3-hydroxytetradecanoyl-[acyl-carrier-protein] and UDP-N-acetyl-alpha-D-glucosamine: step 1/6. Its function is as follows. Involved in the biosynthesis of lipid A, a phosphorylated glycolipid that anchors the lipopolysaccharide to the outer membrane of the cell. This Pseudomonas fluorescens (strain ATCC BAA-477 / NRRL B-23932 / Pf-5) protein is Acyl-[acyl-carrier-protein]--UDP-N-acetylglucosamine O-acyltransferase.